Reading from the N-terminus, the 130-residue chain is Phosphoribosyl-AMP cyclohydrolase (130 aa).

Residue Asp-77 coordinates Mg(2+). Zn(2+) is bound at residue Cys-78. Mg(2+) is bound by residues Asp-79 and Asp-81. The Zn(2+) site is built by Cys-95 and Cys-102.

This sequence belongs to the PRA-CH family. Homodimer. Requires Mg(2+) as cofactor. Zn(2+) serves as cofactor.

It is found in the cytoplasm. It catalyses the reaction 1-(5-phospho-beta-D-ribosyl)-5'-AMP + H2O = 1-(5-phospho-beta-D-ribosyl)-5-[(5-phospho-beta-D-ribosylamino)methylideneamino]imidazole-4-carboxamide. The protein operates within amino-acid biosynthesis; L-histidine biosynthesis; L-histidine from 5-phospho-alpha-D-ribose 1-diphosphate: step 3/9. Its function is as follows. Catalyzes the hydrolysis of the adenine ring of phosphoribosyl-AMP. The protein is Phosphoribosyl-AMP cyclohydrolase of Pseudomonas putida (strain GB-1).